Consider the following 432-residue polypeptide: MGKSVVILGAQWGDEGKGKIVDLLTDRVKYVVRYQGGHNAGHTLIINGEKTVLRLIPSGILRENVTCLIGNGVVLSPAALMQEMGELESRGINVRERLLISEACPLILPYHVAMDHAREAALGKNKIGTTGRGIGPAYEDKVARRGLRVGDLFNREAFAEKLKTILDYYNFQLVNYYKAEAVDFQKTLDDVMAVADIITGMVADVTTMLDKARKNGDNILFEGAQGTMLDIDHGTYPFVTSSNTTAGGVATGAGFGPRNLDYVLGIIKAYCTRVGGGPFTTELFDEVGSEIARKGNEFGAVTGRPRRCGWFDAVAIRRAIQLNSISGFCMTKLDVLDGFDEVKICVAYKMPNGDILDYAPLAAKDWEGVEPIYETMPGWKENTFGVTDVNQLPEACRNYVKRIEEVTGVPVDILSTGPDRVETMILRDPFAA.

Residues 13-19 (GDEGKGK) and 41-43 (GHT) each bind GTP. Asp14 (proton acceptor) is an active-site residue. Asp14 and Gly41 together coordinate Mg(2+). Residues 14–17 (DEGK), 39–42 (NAGH), Thr130, Arg144, Gln225, Thr240, and Arg304 each bind IMP. Catalysis depends on His42, which acts as the Proton donor. Position 300–306 (300–306 (AVTGRPR)) interacts with substrate. Residues Arg306, 332 to 334 (KLD), and 415 to 417 (STG) contribute to the GTP site.

The protein belongs to the adenylosuccinate synthetase family. In terms of assembly, homodimer. Mg(2+) is required as a cofactor.

The protein resides in the cytoplasm. It catalyses the reaction IMP + L-aspartate + GTP = N(6)-(1,2-dicarboxyethyl)-AMP + GDP + phosphate + 2 H(+). Its pathway is purine metabolism; AMP biosynthesis via de novo pathway; AMP from IMP: step 1/2. In terms of biological role, plays an important role in the de novo pathway of purine nucleotide biosynthesis. Catalyzes the first committed step in the biosynthesis of AMP from IMP. The protein is Adenylosuccinate synthetase of Pasteurella multocida (strain Pm70).